Here is a 362-residue protein sequence, read N- to C-terminus: Red-sensitive opsin (362 aa).

Residues methionine 1–valine 49 are Extracellular-facing. Asparagine 31 is a glycosylation site (N-linked (GlcNAc...) asparagine). The chain crosses the membrane as a helical span at residues tyrosine 50–alanine 74. The Cytoplasmic portion of the chain corresponds to threonine 75–asparagine 86. Residues tryptophan 87–isoleucine 112 traverse the membrane as a helical segment. At serine 113–glutamate 126 the chain is on the extracellular side. Cysteine 123 and cysteine 200 are disulfide-bonded. Residues glycine 127–tryptophan 146 traverse the membrane as a helical segment. At glutamate 147 to leucine 165 the chain is on the cytoplasmic side. A helical membrane pass occupies residues alanine 166–serine 189. The Extracellular segment spans residues arginine 190 to serine 215. A helical membrane pass occupies residues tyrosine 216 to isoleucine 243. Residues arginine 244 to arginine 265 are Cytoplasmic-facing. A helical membrane pass occupies residues methionine 266–alanine 289. Residues alanine 290–histidine 297 lie on the Extracellular side of the membrane. Residues proline 298 to methionine 322 form a helical membrane-spanning segment. Lysine 309 carries the post-translational modification N6-(retinylidene)lysine. Residues asparagine 323–alanine 362 are Cytoplasmic-facing.

This sequence belongs to the G-protein coupled receptor 1 family. Opsin subfamily. Post-translationally, phosphorylated on some or all of the serine and threonine residues present in the C-terminal region. The color pigments are found in the cone photoreceptor cells.

The protein localises to the membrane. Its function is as follows. Visual pigments are the light-absorbing molecules that mediate vision. They consist of an apoprotein, opsin, covalently linked to cis-retinal. This is Red-sensitive opsin from Gallus gallus (Chicken).